Here is a 104-residue protein sequence, read N- to C-terminus: Large ribosomal subunit protein bL21 (104 aa).

The protein belongs to the bacterial ribosomal protein bL21 family. Part of the 50S ribosomal subunit. Contacts protein L20.

Its function is as follows. This protein binds to 23S rRNA in the presence of protein L20. The sequence is that of Large ribosomal subunit protein bL21 from Helicobacter pylori (strain HPAG1).